The primary structure comprises 229 residues: Potassium/proton antiporter CemA (229 aa).

The next 2 membrane-spanning stretches (helical) occupy residues 114–134 and 189–209; these read IIYF…LIIL and IISG…KYWI.

This sequence belongs to the CemA family.

The protein resides in the plastid. The protein localises to the chloroplast inner membrane. It catalyses the reaction K(+)(in) + H(+)(out) = K(+)(out) + H(+)(in). Functionally, contributes to K(+)/H(+) antiport activity by supporting proton efflux to control proton extrusion and homeostasis in chloroplasts in a light-dependent manner to modulate photosynthesis. Prevents excessive induction of non-photochemical quenching (NPQ) under continuous-light conditions. Indirectly promotes efficient inorganic carbon uptake into chloroplasts. This chain is Potassium/proton antiporter CemA, found in Lotus japonicus (Lotus corniculatus var. japonicus).